Reading from the N-terminus, the 197-residue chain is Small ribosomal subunit protein uS4c (197 aa).

An S4 RNA-binding domain is found at 82–143 (MRLDNILFRL…KQRSKALIQN (62 aa)).

It belongs to the universal ribosomal protein uS4 family. In terms of assembly, part of the 30S ribosomal subunit. Contacts protein S5. The interaction surface between S4 and S5 is involved in control of translational fidelity.

The protein localises to the plastid. It localises to the chloroplast. Its function is as follows. One of the primary rRNA binding proteins, it binds directly to 16S rRNA where it nucleates assembly of the body of the 30S subunit. Functionally, with S5 and S12 plays an important role in translational accuracy. This chain is Small ribosomal subunit protein uS4c (rps4), found in Gladiolus papilio (Goldblotch gladiolus).